We begin with the raw amino-acid sequence, 328 residues long: Nicotianamine synthase 1 (328 aa).

This sequence belongs to the nicotianamine synthase (NAS)-like family. As to expression, in roots but not in leaves.

The catalysed reaction is 3 S-adenosyl-L-methionine = nicotianamine + 3 S-methyl-5'-thioadenosine + 3 H(+). In terms of biological role, synthesizes nicotianamine, a polyamine that is the first intermediate in the synthesis of the phytosiderophores of the mugineic acid type found in gramineae which serves as a sensor for the physiological iron status within the plant, and/or might be involved in the transport of iron. This Hordeum vulgare (Barley) protein is Nicotianamine synthase 1 (NAS1).